A 198-amino-acid polypeptide reads, in one-letter code: Inositol diphosphatase DSP4 (198 aa).

Residues Met-1 to Arg-23 form a disordered region. In terms of domain architecture, Tyrosine-protein phosphatase spans Asn-34–Cys-188. Residues Phe-90 to Ile-102 are WPD loop important for active site topology. 1D-myo-inositol hexakisphosphate contacts are provided by Asn-101 and Ile-102. Cys-126 (phosphocysteine intermediate) is an active-site residue.

This sequence belongs to the protein-tyrosine phosphatase family. Atypical dual-specificity phosphatase Siw14-like subfamily. In terms of tissue distribution, highly expressed in flowers and at lower levels in roots, leaves, stems and siliques.

It carries out the reaction 5-diphospho-1D-myo-inositol 1,2,3,4,6-pentakisphosphate + H2O = 1D-myo-inositol hexakisphosphate + phosphate + H(+). It catalyses the reaction 1,5-bis(diphospho)-1D-myo-inositol 2,3,4,6-tetrakisphosphate + H2O = 1-diphospho-1D-myo-inositol 2,3,4,5,6-pentakisphosphate + phosphate + 2 H(+). The catalysed reaction is 3,5-bis(diphospho)-1D-myo-inositol 1,2,4,6-tetrakisphosphate + H2O = 3-diphospho-1D-myo-inositol 1,2,4,5,6-pentakisphosphate + phosphate + 2 H(+). The enzyme catalyses 6-diphospho-1D-myo-inositol pentakisphosphate + H2O = 1D-myo-inositol hexakisphosphate + phosphate + H(+). Its function is as follows. Cleaves the beta-phosphate at the 5-position of soluble inositol pyrophosphates. Has highest activity on 5-diphosphoinositol 1,2,3,4,6-pentakisphosphate (5-InsP(7)), 1,5-bis-diphosphoinositol 2,3,4,6-tetrakisphosphate (1,5-InsP(8)) and 3,5-InsP(8). Acts as a negative regulator of defense responses against the bacterial pathogen Pseudomonas syringae pv tomato strain DC3000. The chain is Inositol diphosphatase DSP4 from Arabidopsis thaliana (Mouse-ear cress).